A 216-amino-acid chain; its full sequence is Ribosomal RNA large subunit methyltransferase E (216 aa).

5 residues coordinate S-adenosyl-L-methionine: Gly-71, Trp-73, Asp-88, Asp-104, and Asp-126. Lys-166 acts as the Proton acceptor in catalysis.

The protein belongs to the class I-like SAM-binding methyltransferase superfamily. RNA methyltransferase RlmE family.

The protein localises to the cytoplasm. It carries out the reaction uridine(2552) in 23S rRNA + S-adenosyl-L-methionine = 2'-O-methyluridine(2552) in 23S rRNA + S-adenosyl-L-homocysteine + H(+). Its function is as follows. Specifically methylates the uridine in position 2552 of 23S rRNA at the 2'-O position of the ribose in the fully assembled 50S ribosomal subunit. This is Ribosomal RNA large subunit methyltransferase E from Wolbachia sp. subsp. Brugia malayi (strain TRS).